Reading from the N-terminus, the 320-residue chain is Tryptophan--tRNA ligase (320 aa).

Residues 8–10 (QPT) and 16–17 (GN) each bind ATP. The 'HIGH' region signature appears at 9–17 (PTGRPHWGN). Asp131 lines the L-tryptophan pocket. ATP is bound by residues 143–145 (GVD), Val182, and 189–193 (KMSKS). A 'KMSKS' region motif is present at residues 189–193 (KMSKS).

It belongs to the class-I aminoacyl-tRNA synthetase family. In terms of assembly, homodimer.

Its subcellular location is the cytoplasm. The enzyme catalyses tRNA(Trp) + L-tryptophan + ATP = L-tryptophyl-tRNA(Trp) + AMP + diphosphate + H(+). Its function is as follows. Catalyzes the attachment of tryptophan to tRNA(Trp). This is Tryptophan--tRNA ligase from Rhodopirellula baltica (strain DSM 10527 / NCIMB 13988 / SH1).